A 1111-amino-acid chain; its full sequence is Receptor-type guanylate cyclase gcy-14 (1111 aa).

The N-terminal stretch at 1–14 is a signal peptide; that stretch reads MCLFLLLFPYLASG. Over 15-473 the chain is Extracellular; that stretch reads QFLQTVKVGL…ECPPDFVKEY (459 aa). 6 N-linked (GlcNAc...) asparagine glycosylation sites follow: Asn65, Asn130, Asn318, Asn340, Asn365, and Asn379. Residues 474–494 traverse the membrane as a helical segment; that stretch reads LVYTIIAAVIVVLALLAGCAG. Positions 482-817 constitute a Protein kinase domain; the sequence is VIVVLALLAG…KSNLMDHVFN (336 aa). Residues 488–496 and Lys545 each bind ATP; that span reads LLAGCAGLL. At 495–1111 the chain is on the cytoplasmic side; that stretch reads LLYTMQMKRK…DFNNGNECVS (617 aa). In terms of domain architecture, Guanylate cyclase spans 875 to 1005; the sequence is TIFFSDVVQF…DAVNTASRME (131 aa). The tract at residues 1061-1082 is disordered; it reads SAQAPREKTPEPPRRQSVRSIS. Over residues 1065–1074 the composition is skewed to basic and acidic residues; sequence PREKTPEPPR.

This sequence belongs to the adenylyl cyclase class-4/guanylyl cyclase family. Homodimer. As to expression, expressed asymmetrically in ASEL sensory neuron.

The protein localises to the cell membrane. It is found in the cell projection. Its subcellular location is the cilium. It carries out the reaction GTP = 3',5'-cyclic GMP + diphosphate. Guanylate cyclase involved in the production of the second messenger cGMP. Regulates chemotaxis responses toward Na(1+) and Li(1+) salt ions and alkaline pH in ASE left (ASEL) sensory neuron. Directly senses environmental alkalinity in ASEL neuron which probably leads to the activation of cGMP-gated cation channel tax2/tax4. This Caenorhabditis elegans protein is Receptor-type guanylate cyclase gcy-14.